The chain runs to 828 residues: Class I hydrophobin hum3 (828 aa).

The signal sequence occupies residues 1–22; it reads MKYLQFLAAVAAVSAFSGPVLA. N156, N222, and N738 each carry an N-linked (GlcNAc...) asparagine glycan. 4 disulfides stabilise this stretch: C750/C808, C757/C802, C758/C788, and C809/C822. N811 is a glycosylation site (N-linked (GlcNAc...) asparagine).

This sequence in the C-terminal section; belongs to the fungal hydrophobin family. Self-assembles to form functional amyloid fibrils called rodlets. Self-assembly into fibrillar rodlets occurs spontaneously at hydrophobic:hydrophilic interfaces and the rodlets further associate laterally to form amphipathic monolayers. Post-translationally, hum3 is an atypical hydrophobin that consists in a repetitive repellent-like region that spans 578 aa which is separated from a hydrophobin-like domain by a spacer region containing three possible kex2 processing sites. The repetitive region contains 17 amphipathic repeats of 31-36 aa each of them with a C-terminal putative kex2 processing motif.

The protein resides in the secreted. The protein localises to the cell wall. Aerial growth, conidiation, and dispersal of filamentous fungi in the environment rely upon a capability of their secreting small amphipathic proteins called hydrophobins (HPBs) with low sequence identity. Class I can self-assemble into an outermost layer of rodlet bundles on aerial cell surfaces, conferring cellular hydrophobicity that supports fungal growth, development and dispersal; whereas Class II form highly ordered films at water-air interfaces through intermolecular interactions but contribute nothing to the rodlet structure. Atypical class I hydrophobin that is preceded by a signal sequence and 17 imperfect repeats. The repeated peptides might function as repellents whereas the class I hydrophobin seems not to be crucial for the formation of aerial hyphae. Hydrophobins of Mycosarcoma maydis have been functionally replaced, at least partially, by repellents. Hum3 and rsp1 together are pathogenicity proteins that share an essential function in early stages of the infection. The polypeptide is Class I hydrophobin hum3 (Mycosarcoma maydis (Corn smut fungus)).